The chain runs to 288 residues: Polyprenyl transferase eriF (288 aa).

6 helical membrane-spanning segments follow: residues 24–44 (ASII…TLPL), 51–71 (YIFL…LNQV), 101–121 (IAAF…LPET), 145–165 (CIAM…AISP), 215–235 (FIIT…GGIF), and 268–288 (FYTY…HGLI).

It belongs to the UbiA prenyltransferase family. Mg(2+) serves as cofactor.

It localises to the membrane. Its function is as follows. Polyprenyl transferase; part of the gene cluster that mediates the biosynthesis of erinacines, cyathane-xylosides that show unique biological activities, including leishmanicidal activity, stimulating activity for nerve growth-factor synthesis, and agonistic activity toward the kappa opioid receptor. The role of eriF within the pathway has still to be determined. The first step of the erinacines biosynthesis pathway is catalyzed by the geranylgeranyl diphosphate (GGPP) synthase eriE via conversion of farnesyl pyrophosphate and isopentyl pyrophosphate into geranylgeranyl pyrophosphate (GGPP). GGPP is then substrate of the diterpene cyclase eriG for the production of cyatha-3,12-diene. The cytochrome P450 monooxygenase eriI then hydroxylates cyatha-3,12-diene at C-14 of the seven-membered ring to produce erinacol, which is further hydroxylated at C-15 by the cytochrome P450 monooxygenase eriC to yield cyathadiol. The cytochrome P450 monooxygenase eriA then catalyzes C-11 hydroxylation in the presence of the short chain dehydrogenase/reductase (SDR) eriH, which leads to the production of cyathatriol. The acetyltransferase eriL converts cyathatriol into 11-O-acetyl-cyathatriol. The SDR eriH catalyzes further oxidation of 11-O-acetyl-cyathatriol into 1-O-acetylcyathin A3. Finally, the glycosyl transferase eriJ tranfers xylose from UDP-xylose onto C-14 of 11-O-acetyl-cyathatriol to form eracine Q. EriJ is also able to convert 11-O-acetyl-cyathatriol to eracine Q2 by using UDP-D-glucose as cosubstrate, but at a lower rate. The protein is Polyprenyl transferase eriF of Hericium erinaceus (Lion's mane mushroom).